Reading from the N-terminus, the 162-residue chain is Probable chemoreceptor glutamine deamidase CheD (162 aa).

Belongs to the CheD family.

It catalyses the reaction L-glutaminyl-[protein] + H2O = L-glutamyl-[protein] + NH4(+). Probably deamidates glutamine residues to glutamate on methyl-accepting chemotaxis receptors (MCPs), playing an important role in chemotaxis. This Clostridium novyi (strain NT) protein is Probable chemoreceptor glutamine deamidase CheD.